The chain runs to 145 residues: Deoxyuridine 5'-triphosphate nucleotidohydrolase (145 aa).

Substrate is bound by residues 63 to 65 (RSG), glutamine 76, and 80 to 82 (TVD).

Belongs to the dUTPase family. Requires Mg(2+) as cofactor.

It catalyses the reaction dUTP + H2O = dUMP + diphosphate + H(+). The protein operates within pyrimidine metabolism; dUMP biosynthesis; dUMP from dCTP (dUTP route): step 2/2. Functionally, this enzyme is involved in nucleotide metabolism: it produces dUMP, the immediate precursor of thymidine nucleotides and it decreases the intracellular concentration of dUTP so that uracil cannot be incorporated into DNA. In Chlamydia trachomatis serovar L2 (strain ATCC VR-902B / DSM 19102 / 434/Bu), this protein is Deoxyuridine 5'-triphosphate nucleotidohydrolase.